We begin with the raw amino-acid sequence, 132 residues long: Histone H2A.1 (132 aa).

Belongs to the histone H2A family. As to quaternary structure, the nucleosome is a histone octamer containing two molecules each of H2A, H2B, H3 and H4 assembled in one H3-H4 heterotetramer and two H2A-H2B heterodimers. The octamer wraps approximately 147 bp of DNA.

Its subcellular location is the nucleus. The protein resides in the chromosome. Functionally, core component of nucleosome. Nucleosomes wrap and compact DNA into chromatin, limiting DNA accessibility to the cellular machineries which require DNA as a template. Histones thereby play a central role in transcription regulation, DNA repair, DNA replication and chromosomal stability. DNA accessibility is regulated via a complex set of post-translational modifications of histones, also called histone code, and nucleosome remodeling. The polypeptide is Histone H2A.1 (Leishmania infantum).